The sequence spans 177 residues: Coatomer subunit zeta-1 (177 aa).

Met-1 is subject to N-acetylmethionine.

The protein belongs to the adaptor complexes small subunit family. In terms of assembly, oligomeric complex that consists of at least the alpha, beta, beta', gamma, delta, epsilon and zeta subunits.

Its subcellular location is the cytoplasm. The protein localises to the golgi apparatus membrane. It is found in the cytoplasmic vesicle. It localises to the COPI-coated vesicle membrane. The coatomer is a cytosolic protein complex that binds to dilysine motifs and reversibly associates with Golgi non-clathrin-coated vesicles, which further mediate biosynthetic protein transport from the ER, via the Golgi up to the trans Golgi network. Coatomer complex is required for budding from Golgi membranes, and is essential for the retrograde Golgi-to-ER transport of dilysine-tagged proteins. The zeta subunit may be involved in regulating the coat assembly and, hence, the rate of biosynthetic protein transport due to its association-dissociation properties with the coatomer complex. The polypeptide is Coatomer subunit zeta-1 (COPZ1) (Homo sapiens (Human)).